We begin with the raw amino-acid sequence, 228 residues long: Fibrillarin-like rRNA/tRNA 2'-O-methyltransferase (228 aa).

S-adenosyl-L-methionine contacts are provided by residues 85–86 (TT), 103–104 (EF), 128–129 (DA), and 148–151 (DVAQ).

It belongs to the methyltransferase superfamily. Fibrillarin family. Interacts with nop5. Component of box C/D small ribonucleoprotein (sRNP) particles that contain rpl7ae, FlpA and nop5, plus a guide RNA.

In terms of biological role, involved in pre-rRNA and tRNA processing. Utilizes the methyl donor S-adenosyl-L-methionine to catalyze the site-specific 2'-hydroxyl methylation of ribose moieties in rRNA and tRNA. Site specificity is provided by a guide RNA that base pairs with the substrate. Methylation occurs at a characteristic distance from the sequence involved in base pairing with the guide RNA. This Methanococcus voltae protein is Fibrillarin-like rRNA/tRNA 2'-O-methyltransferase.